A 399-amino-acid chain; its full sequence is Pyridinium-3,5-bisthiocarboxylic acid mononucleotide nickel insertion protein (399 aa).

The protein belongs to the LarC family.

It carries out the reaction Ni(II)-pyridinium-3,5-bisthiocarboxylate mononucleotide = pyridinium-3,5-bisthiocarboxylate mononucleotide + Ni(2+). In terms of biological role, involved in the biosynthesis of a nickel-pincer cofactor ((SCS)Ni(II) pincer complex). Binds Ni(2+), and functions in nickel delivery to pyridinium-3,5-bisthiocarboxylic acid mononucleotide (P2TMN), to form the mature cofactor. Is thus probably required for the activation of nickel-pincer cofactor-dependent enzymes. This Clostridium kluyveri (strain ATCC 8527 / DSM 555 / NBRC 12016 / NCIMB 10680 / K1) protein is Pyridinium-3,5-bisthiocarboxylic acid mononucleotide nickel insertion protein.